Reading from the N-terminus, the 547-residue chain is Probable FMN/FAD exporter YeeO (547 aa).

Helical transmembrane passes span 94–114 (ITPL…MGVL), 139–159 (VIMA…AFSL), 174–194 (SLVI…HFGE), 211–231 (LALT…ITLI), 246–268 (LLIN…YGLF), 281–301 (GLTI…AIGF), 318–338 (FSII…SVLF), 350–370 (AGMG…AALI), 404–424 (VFWL…PFAG), 439–459 (VVVI…ASWV), and 486–506 (VVVG…VWMG).

This sequence belongs to the multi antimicrobial extrusion (MATE) (TC 2.A.66.1) family.

It localises to the cell inner membrane. Its function is as follows. A transporter able to export peptides and flavins. When overexpressed allows cells deleted for multiple peptidases (pepA, pepB, pepD and pepN) to grow in the presence of dipeptides Ala-Gln or Gly-Tyr which otherwise inhibit growth. Cells overexpressing this protein have decreased intracellular levels of Ala-Gln dipeptide, and in a system that produces the Ala-Gln dipeptide, overproduction of this protein increases its export. When overexpressed increases secretion of FMN and FAD but not riboflavin; intracellular concentrations of FMN and riboflavin rise, possibly to compensate for increased secretion. Increased overexpression causes slight cell elongation. This is Probable FMN/FAD exporter YeeO (yeeO) from Escherichia coli (strain K12).